We begin with the raw amino-acid sequence, 342 residues long: S-adenosylmethionine:tRNA ribosyltransferase-isomerase (342 aa).

This sequence belongs to the QueA family. In terms of assembly, monomer.

The protein resides in the cytoplasm. The enzyme catalyses 7-aminomethyl-7-carbaguanosine(34) in tRNA + S-adenosyl-L-methionine = epoxyqueuosine(34) in tRNA + adenine + L-methionine + 2 H(+). It functions in the pathway tRNA modification; tRNA-queuosine biosynthesis. Its function is as follows. Transfers and isomerizes the ribose moiety from AdoMet to the 7-aminomethyl group of 7-deazaguanine (preQ1-tRNA) to give epoxyqueuosine (oQ-tRNA). This chain is S-adenosylmethionine:tRNA ribosyltransferase-isomerase, found in Novosphingobium aromaticivorans (strain ATCC 700278 / DSM 12444 / CCUG 56034 / CIP 105152 / NBRC 16084 / F199).